A 149-amino-acid chain; its full sequence is YbbR-like domain-containing protein in def 5'region (149 aa).

The YbbR-like domain maps to isoleucine 1–glutamate 68.

This is YbbR-like domain-containing protein in def 5'region from Thermus thermophilus.